Here is a 1019-residue protein sequence, read N- to C-terminus: Limulus clotting factor C (1019 aa).

The N-terminal stretch at 1–25 (MVLASFLVSGLVLGLLAQKMRPVQS) is a signal peptide. The region spanning 102–137 (YGTWCSGECQCKNGGICDQRTGACACRDRYEGVHCE) is the EGF-like domain. Cystine bridges form between cysteine 106–cysteine 118, cysteine 112–cysteine 125, cysteine 127–cysteine 136, cysteine 142–cysteine 182, cysteine 168–cysteine 195, cysteine 199–cysteine 241, cysteine 227–cysteine 254, cysteine 260–cysteine 308, cysteine 294–cysteine 321, cysteine 331–cysteine 350, cysteine 354–cysteine 374, cysteine 436–cysteine 447, cysteine 464–cysteine 564, cysteine 538–cysteine 556, cysteine 576–cysteine 621, cysteine 607–cysteine 634, and cysteine 720–cysteine 748. Sushi domains follow at residues 140–197 (KGCP…KCIR), 198–256 (ECAM…QCKN), and 258–323 (VFCP…SCVK). The LCCL domain occupies 325 to 421 (ADREVDCDSK…EELKSLARSF (97 aa)). One can recognise a C-type lectin domain in the interval 436–568 (CPDGWFEVDE…PSSFACMMDL (133 aa)). Residues asparagine 523 and asparagine 534 are each glycosylated (N-linked (GlcNAc...) asparagine). Sushi domains follow at residues 574 to 636 (AKCD…RCIK) and 689 to 750 (PRSS…SCIP). N-linked (GlcNAc...) asparagine glycans are attached at residues asparagine 624, asparagine 740, and asparagine 767. One can recognise a Peptidase S1 domain in the interval 763 to 1019 (IWNGNSTEIG…VFLSWIRQFI (257 aa)). A disulfide bond links cysteine 794 and cysteine 810. Residues histidine 809 and aspartate 865 each act as charge relay system in the active site. A glycan (N-linked (GlcNAc...) asparagine) is linked at asparagine 912. Residues cysteine 932 and cysteine 951 are joined by a disulfide bond. Aspartate 960 is a binding site for substrate. Cysteine 962 and cysteine 996 are disulfide-bonded. Residue serine 966 is the Charge relay system of the active site.

It belongs to the peptidase S1 family. As to quaternary structure, heterodimer of a light chain and a heavy chain linked by a disulfide bond.

It is found in the secreted. The catalysed reaction is Selective cleavage of 103-Arg-|-Ser-104 and 124-Ile-|-Ile-125 bonds in Limulus clotting factor B to form activated factor B. Cleavage of -Pro-Arg-|-Xaa- bonds in synthetic substrates.. With respect to regulation, activated by Gram-negative bacterial lipopolysaccharides and chymotrypsin. In terms of biological role, this enzyme is closely associated with an endotoxin-sensitive hemolymph coagulation system which may play important roles in both hemostasis and host defense mechanisms. Its active form catalyzes the activation of factor B. This chain is Limulus clotting factor C, found in Carcinoscorpius rotundicauda (Mangrove horseshoe crab).